The sequence spans 327 residues: Phenylalanine--tRNA ligase alpha subunit (327 aa).

E252 serves as a coordination point for Mg(2+).

The protein belongs to the class-II aminoacyl-tRNA synthetase family. Phe-tRNA synthetase alpha subunit type 1 subfamily. Tetramer of two alpha and two beta subunits. Mg(2+) serves as cofactor.

It is found in the cytoplasm. It carries out the reaction tRNA(Phe) + L-phenylalanine + ATP = L-phenylalanyl-tRNA(Phe) + AMP + diphosphate + H(+). The sequence is that of Phenylalanine--tRNA ligase alpha subunit from Vibrio cholerae serotype O1 (strain ATCC 39541 / Classical Ogawa 395 / O395).